A 202-amino-acid chain; its full sequence is Rho GDP-dissociation inhibitor (202 aa).

The residue at position 2 (Ala-2) is an N-acetylalanine. Thr-27 carries the phosphothreonine modification. The residue at position 40 (Ser-40) is a Phosphoserine.

The protein belongs to the Rho GDI family.

The protein localises to the cytoplasm. Its function is as follows. Regulates the GDP/GTP exchange reaction of the Rho proteins by inhibiting the dissociation of GDP from them, and the subsequent binding of GTP to them. The chain is Rho GDP-dissociation inhibitor (RDI1) from Saccharomyces cerevisiae (strain ATCC 204508 / S288c) (Baker's yeast).